A 329-amino-acid polypeptide reads, in one-letter code: Putative dehydrogenase RB0419 (329 aa).

This sequence belongs to the ornithine cyclodeaminase/mu-crystallin family.

The chain is Putative dehydrogenase RB0419 from Rhizobium meliloti (strain 1021) (Ensifer meliloti).